A 1861-amino-acid chain; its full sequence is MNKKLFTNRFISFNMSLLLVLTAVFSSIPLHSVHAADNASVVANIVGEFQDQLGDSNWNIDSNITIMQYMGNGLYEFTTPTQLKAGSYQYKVALNHSWDGGGVPSQGNLTLNLANDSYVTFWFDYNTQSVTDSTKYTPIANDKLPRLVGTIQSAIGAGNDWKPETSTAIMTDDNFDNVYSYTAHVPKGDYQYKVTLGNTWDENYGANGVKDGSNIQINVTNDADITFYYDANTHNIWTNYSPILTGLDNNIYYDDLKHDTHDSFFRNPFGAVKVDQTVTLRIQAKNHDLESARISYWDDINKIRIELPMTRIGESPDGNFEYWEIKLSFDHPTRIWYYFILKDGTKTAYYGDNDDQLGGVGKATDTVNKDFELTVYDKNFDTPDWMKGAVMYQIFPDRFYNGDTSNDHAKTLSRGNDPIEFHNNWNDLPDNPNNAGTPGYTGDGIWSNDFFGDLKGIDDKLDYLKGLGVSVIYLNPIFESPSNHKYDTADYTKIDEMFGTTQDFEKLMSDAHAKGIKIILDGVFNHTSDDSIYFNRYGKYPGLGAYQAWKEGNQSLSPYGDWYTINSDGTYECWWGYDSLPVIKSLNGSEYNVTSWANFIINDENAISKYWLNPDGNLNDGADGWRLDVENEVAHDFWTHFRNAINTVKFEAPMIAENWGDASLDLLGDSFNSVMNYQFRNDIIDFLIGQSFDDGNGQHNPIDAAKLDQRLMSIYERYPLPAFYSTMNLLGSHDTMRILTVFGYNSADPNENSDAAKQLAEQKLKLATILQMGYPGMADIYYGDEAGVSGGKDPDDRRTFPWGNEDTTLQDFFKNISSIRNNNQVLKTGDLETLYAQNDVYAIGRRIINGKDAFGTSYPDSAAIVAINRSKSDKQIAIDTTKFLRDGVTFKDLINNNVSYSISNGQIVIDVPAMSGVMLISDDGQDLTAPQAPSNVVVTSGNGKVDLSWLQSDGATGYNIYRSSVEGGLYEKIASNVTETTFEDANVTNGLKYVYAISAIDELGNESGISNDAVAYPAYPIGWVGNLTQVSDNHIIGVDKPTEDIYAEVWADGLTNSTGQGPNMIAQLGYKYVSGTVYDSVYGSVYNSVYGVDDSGFTWVNAQYVGDIGNNDQYKASFTPDKIGQWEYLMRFSDNQGQDWITTSTLSFYVVPSDDLIKPTAPYLNQPGTESSRVSLTWNPSTDNVGIYDYEIYRSDGGTFNKIATVSNEVYNYIDTSVINGVTYNYKVVAVDLSFNRTESNVVTIKPDVVPIKVIFNVTVPDYTPDAVNLAGTFPNATWDPSAQQMTKIDNNTYSITLTLDEGTQIEYKYARGSWDKVEKDEYGNEFASNRKVTIVNQGNNEMTINDTVYRWRDIPIFIYSPSSNMTVDSNISTMEVKGNTYKGAKVTINGDSFVQDKNGVFTKDVSLNYGVNKIKIHVEPNDGSVYGNDQGRITELTKDIEIDVIRQENNSGSGTGNNNTSTSGSNSSSTGSGSTGSTSITSNISNTSNTSNTIGVITKNGNVITLTLDAGKAKDLIVNSKDKKVVFDITTIGEGQQKVVQISKDILDTSAANGKDIVIKSDNASIALTKDALNQNQIQNGVNVSIKDNGKPNVTNYVSLSNVVDITISGISGNVTLAKPVEVTLNISKANDPRKVAVYYYNPTTNQWEYVGGKVDASSGTITFNATHFSQYAAFEYDKTFNDIKDNWAKDVIEVLASRHIVEGMTDTQYEPNKTVTRAEFTAMILRLLNIKDETYSGEFSDVKSGDWYANAIEAAYKAGIIEGDGKNARPNDSITREEMTAIAMRAYEMLTQYKEENIGATTFSDDKSISDWARNVVANAAKLGIVNGEPNNVFAPKGNATRAEAAAIIYGLLEKSGNI.

An N-terminal signal peptide occupies residues 1–35 (MNKKLFTNRFISFNMSLLLVLTAVFSSIPLHSVHA). Residues D248, N250, D288, D343, N401, D403, N406, D407, and D453 each coordinate Ca(2+). 2 residues coordinate substrate: H526 and R626. The active-site Nucleophile is D628. The active-site Proton donor is E657. Substrate-binding positions include 733 to 734 (HD), D793, and R797. 2 consecutive Fibronectin type-III domains span residues 929 to 1021 (APQA…AYPI) and 1158 to 1252 (KPTA…VVPI). In terms of domain architecture, CBM20 spans 1246–1354 (KPDVVPIKVI…INDTVYRWRD (109 aa)). A disordered region spans residues 1448 to 1486 (QENNSGSGTGNNNTSTSGSNSSSTGSGSTGSTSITSNIS). The span at 1450–1486 (NNSGSGTGNNNTSTSGSNSSSTGSGSTGSTSITSNIS) shows a compositional bias: low complexity. SLH domains are found at residues 1677–1740 (EYDK…YSGE), 1741–1799 (FSDV…KEEN), and 1802–1861 (ATTF…SGNI).

Belongs to the glycosyl hydrolase 13 family. Requires Ca(2+) as cofactor. In terms of processing, glycosylated.

The protein resides in the secreted. It localises to the cell wall. It carries out the reaction Endohydrolysis of (1-&gt;4)-alpha-D-glucosidic linkages in polysaccharides containing three or more (1-&gt;4)-alpha-linked D-glucose units.. It catalyses the reaction Hydrolysis of (1-&gt;6)-alpha-D-glucosidic linkages in pullulan, amylopectin and glycogen, and in the alpha- and beta-limit dextrins of amylopectin and glycogen.. This Thermoanaerobacterium thermosulfurigenes (Clostridium thermosulfurogenes) protein is Amylopullulanase (amyB).